The primary structure comprises 85 residues: MMAVKKSRKRTAATELKKPRRNQLEALGVTTIDYKDVAVLRTFLSERGKIRSRHVTGLTPQQQRQVATAIKNAREMALLPMAGPR.

Belongs to the bacterial ribosomal protein bS18 family. Part of the 30S ribosomal subunit. Forms a tight heterodimer with protein bS6.

Functionally, binds as a heterodimer with protein bS6 to the central domain of the 16S rRNA, where it helps stabilize the platform of the 30S subunit. The chain is Small ribosomal subunit protein bS18A from Mycolicibacterium smegmatis (strain ATCC 700084 / mc(2)155) (Mycobacterium smegmatis).